Consider the following 274-residue polypeptide: 16S rRNA (guanine(1405)-N(7))-methyltransferase (274 aa).

Residues F64, 102–104 (HMS), R108, A133, D156, 182–183 (DL), L198, and Q207 each bind S-adenosyl-L-methionine.

This sequence belongs to the methyltransferase superfamily. Aminoglycoside resistance family.

It carries out the reaction guanosine(1405) in 16S rRNA + S-adenosyl-L-methionine = N(7)-methylguanosine(1405) in 16S rRNA + S-adenosyl-L-homocysteine. Functionally, specifically methylates the N(7) position of guanine 1405 in 16S rRNA. Confers resistance to aminoglycosides. This is 16S rRNA (guanine(1405)-N(7))-methyltransferase (grm) from Micromonospora rosea.